The sequence spans 204 residues: MNFKYIVAVSILIASAYARSEENDIQSLSQRDVLEEESLREIRGIGASILSAGKSALKGLAKGLAEHFANGKRTAEDHEVMKRLEAAIQSLSQRDVLEEESLREIRGIGASILSAGKSALKGLAKGLAEHFANGKRTAEEHEVMKRLEAVMRDLDSLDYPEEASEMETRSFNQEEIANLYTKKEKRILGPILGLVSNALGGLLG.

A signal peptide (or 18) is located at residues 1–16; that stretch reads MNFKYIVAVSILIASA. 2 positions are modified to asparagine amide: N70 and N133.

Belongs to the bombinin family. In terms of tissue distribution, expressed by the skin glands.

It localises to the secreted. Has antimicrobial activity, but no hemolytic activity. Preference on killing Gram-negative non-enteric bacteria. This Bombina orientalis (Oriental fire-bellied toad) protein is Bombinin-like peptides 1.